Reading from the N-terminus, the 101-residue chain is MFVKTGDTVKVIAGKDRGTTGKVIKALPKVNKVVVEGVAIMKKHQKPNSENPSGAILEIEAPIHVSNVQVLDKNGVAGRVGYKVVDDKKVRFNKKSGEILD.

The protein belongs to the universal ribosomal protein uL24 family. As to quaternary structure, part of the 50S ribosomal subunit.

One of two assembly initiator proteins, it binds directly to the 5'-end of the 23S rRNA, where it nucleates assembly of the 50S subunit. Functionally, one of the proteins that surrounds the polypeptide exit tunnel on the outside of the subunit. The polypeptide is Large ribosomal subunit protein uL24 (Lactococcus lactis subsp. lactis (strain IL1403) (Streptococcus lactis)).